The sequence spans 326 residues: tRNA N6-adenosine threonylcarbamoyltransferase (326 aa).

Fe cation is bound by residues histidine 111 and histidine 115. Substrate-binding positions include 134–138 (TVSGG), aspartate 167, glycine 180, aspartate 184, and asparagine 268. Aspartate 293 lines the Fe cation pocket.

This sequence belongs to the KAE1 / TsaD family. Fe(2+) serves as cofactor.

It localises to the cytoplasm. The enzyme catalyses L-threonylcarbamoyladenylate + adenosine(37) in tRNA = N(6)-L-threonylcarbamoyladenosine(37) in tRNA + AMP + H(+). In terms of biological role, required for the formation of a threonylcarbamoyl group on adenosine at position 37 (t(6)A37) in tRNAs that read codons beginning with adenine. Is involved in the transfer of the threonylcarbamoyl moiety of threonylcarbamoyl-AMP (TC-AMP) to the N6 group of A37, together with TsaE and TsaB. TsaD likely plays a direct catalytic role in this reaction. This Dehalococcoides mccartyi (strain ATCC BAA-2100 / JCM 16839 / KCTC 5957 / BAV1) protein is tRNA N6-adenosine threonylcarbamoyltransferase.